Here is a 1107-residue protein sequence, read N- to C-terminus: Miniconductance mechanosensitive channel MscM (1107 aa).

The first 19 residues, 1–19, serve as a signal peptide directing secretion; that stretch reads MRLIITFLMAWCLSWGAYA. 11 helical membrane passes run 467 to 487, 522 to 542, 551 to 571, 600 to 620, 628 to 648, 674 to 694, 698 to 718, 785 to 805, 828 to 848, 875 to 895, and 910 to 930; these read VMML…ILVG, LFWS…LGYG, LAVA…VVMI, YLMS…FDNL, SLGR…TLSL, MMIG…LATA, LARL…YHVI, ILML…HSAF, PITL…TQLV, TITK…MIGI, and GLGF…IILF.

It belongs to the MscS (TC 1.A.23) family. As to quaternary structure, homoheptamer.

It localises to the cell inner membrane. In terms of biological role, mechanosensitive channel that protects cells against hypoosmotic stress when highly overexpressed. Gates spontaneously in response to increased membrane tension. The polypeptide is Miniconductance mechanosensitive channel MscM (mscM) (Escherichia coli (strain K12)).